Reading from the N-terminus, the 416-residue chain is Formyl-CoA:oxalate CoA-transferase (416 aa).

CoA contacts are provided by residues 17-18, R38, 72-75, 96-98, H104, and 137-140; these read QS, LNTK, NFH, and KAYE. D169 serves as the catalytic Nucleophile. Residue 248 to 250 participates in substrate binding; sequence GGQ. CoA is bound at residue 273 to 275; the sequence is QEQ.

It belongs to the CoA-transferase III family. Frc subfamily. As to quaternary structure, homodimer.

It catalyses the reaction formyl-CoA + oxalate = oxalyl-CoA + formate. The protein operates within metabolic intermediate degradation; oxalate degradation; CO(2) and formate from oxalate: step 1/2. In terms of biological role, involved in the catabolism of oxalate and in the adapatation to low pH via the induction of the oxalate-dependent acid tolerance response (ATR). Catalyzes the transfer of the CoA moiety from formyl-CoA to oxalate. The sequence is that of Formyl-CoA:oxalate CoA-transferase from Escherichia coli O17:K52:H18 (strain UMN026 / ExPEC).